We begin with the raw amino-acid sequence, 284 residues long: Tropomyosin-1 (284 aa).

A coiled-coil region spans residues 1–284 (MDGIKKKMIA…DQTFAELTGY (284 aa)). A disordered region spans residues 111-131 (TKLEEASKTAEESERGRKDLE).

The protein belongs to the tropomyosin family. In terms of assembly, homodimer.

In terms of biological role, tropomyosin, in association with the troponin complex, plays a central role in the calcium dependent regulation of muscle contraction. This chain is Tropomyosin-1, found in Schistosoma mansoni (Blood fluke).